Consider the following 268-residue polypeptide: Undecaprenyl-diphosphatase 1 (268 aa).

A run of 7 helical transmembrane segments spans residues 5 to 25, 43 to 63, 84 to 104, 107 to 127, 184 to 204, 218 to 238, and 247 to 267; these read SIIS…IPVS, GNTF…LVYF, LAVL…HDFI, VLFE…FILL, AAEF…VLDL, LIAV…RSLL, and APFA…LLVI.

This sequence belongs to the UppP family.

It is found in the cell inner membrane. The enzyme catalyses di-trans,octa-cis-undecaprenyl diphosphate + H2O = di-trans,octa-cis-undecaprenyl phosphate + phosphate + H(+). Functionally, catalyzes the dephosphorylation of undecaprenyl diphosphate (UPP). Confers resistance to bacitracin. The protein is Undecaprenyl-diphosphatase 1 of Agrobacterium fabrum (strain C58 / ATCC 33970) (Agrobacterium tumefaciens (strain C58)).